The chain runs to 554 residues: Asparagine--tRNA ligase, cytoplasmic (554 aa).

This sequence belongs to the class-II aminoacyl-tRNA synthetase family.

The protein localises to the cytoplasm. It is found in the cytosol. It carries out the reaction tRNA(Asn) + L-asparagine + ATP = L-asparaginyl-tRNA(Asn) + AMP + diphosphate + H(+). Catalyzes the attachment of asparagine to tRNA(Asn) in a two-step reaction: asparagine is first activated by ATP to form Asn-AMP and then transferred to the acceptor end of tRNA(Asn). The sequence is that of Asparagine--tRNA ligase, cytoplasmic from Saccharomyces cerevisiae (strain ATCC 204508 / S288c) (Baker's yeast).